The primary structure comprises 79 residues: Three-finger toxin A2 (79 aa).

An N-terminal signal peptide occupies residues Met-1 to Ser-21. Cystine bridges form between Cys-24–Cys-41, Cys-34–Cys-59, Cys-63–Cys-71, and Cys-72–Cys-77.

This sequence belongs to the three-finger toxin family. Short-chain subfamily. Expressed by the venom gland.

It is found in the secreted. The chain is Three-finger toxin A2 from Micrurus laticollaris (Balsas coral snake).